The following is a 301-amino-acid chain: UDP-N-acetylenolpyruvoylglucosamine reductase (301 aa).

Residues 30-194 (VGGEADYLVF…LSVKFALAPG (165 aa)) form the FAD-binding PCMH-type domain. Residue Arg-173 is part of the active site. Catalysis depends on Ser-223, which acts as the Proton donor. The active site involves Glu-293.

This sequence belongs to the MurB family. Requires FAD as cofactor.

Its subcellular location is the cytoplasm. It catalyses the reaction UDP-N-acetyl-alpha-D-muramate + NADP(+) = UDP-N-acetyl-3-O-(1-carboxyvinyl)-alpha-D-glucosamine + NADPH + H(+). The protein operates within cell wall biogenesis; peptidoglycan biosynthesis. Its function is as follows. Cell wall formation. The polypeptide is UDP-N-acetylenolpyruvoylglucosamine reductase (Streptococcus pneumoniae (strain JJA)).